We begin with the raw amino-acid sequence, 154 residues long: Crossover junction endodeoxyribonuclease RuvC (154 aa).

Active-site residues include Asp-7, Glu-67, and Asp-139. 3 residues coordinate Mg(2+): Asp-7, Glu-67, and Asp-139.

It belongs to the RuvC family. In terms of assembly, homodimer which binds Holliday junction (HJ) DNA. The HJ becomes 2-fold symmetrical on binding to RuvC with unstacked arms; it has a different conformation from HJ DNA in complex with RuvA. In the full resolvosome a probable DNA-RuvA(4)-RuvB(12)-RuvC(2) complex forms which resolves the HJ. It depends on Mg(2+) as a cofactor.

It localises to the cytoplasm. It catalyses the reaction Endonucleolytic cleavage at a junction such as a reciprocal single-stranded crossover between two homologous DNA duplexes (Holliday junction).. In terms of biological role, the RuvA-RuvB-RuvC complex processes Holliday junction (HJ) DNA during genetic recombination and DNA repair. Endonuclease that resolves HJ intermediates. Cleaves cruciform DNA by making single-stranded nicks across the HJ at symmetrical positions within the homologous arms, yielding a 5'-phosphate and a 3'-hydroxyl group; requires a central core of homology in the junction. The consensus cleavage sequence is 5'-(A/T)TT(C/G)-3'. Cleavage occurs on the 3'-side of the TT dinucleotide at the point of strand exchange. HJ branch migration catalyzed by RuvA-RuvB allows RuvC to scan DNA until it finds its consensus sequence, where it cleaves and resolves the cruciform DNA. The polypeptide is Crossover junction endodeoxyribonuclease RuvC (Synechococcus sp. (strain CC9605)).